We begin with the raw amino-acid sequence, 432 residues long: Killer cell immunoglobulin-like receptor 3DL1 (432 aa).

Positions 1-21 are cleaved as a signal peptide; it reads MLLWFLSLVCSGFFLVQRMSA. At 22 to 335 the chain is on the extracellular side; sequence HVGSHDKPFL…ADTKTNNYKN (314 aa). 3 consecutive Ig-like C2-type domains span residues 42 to 100, 135 to 202, and 238 to 301; these read GQNV…HPQY, GGNV…NSYY, and GETM…FRNA. Asparagine 44 carries an N-linked (GlcNAc...) asparagine glycan. A disulfide bridge links cysteine 49 with cysteine 95. N-linked (GlcNAc...) asparagine glycosylation occurs at asparagine 137. Disulfide bonds link cysteine 142/cysteine 195 and cysteine 245/cysteine 294. Asparagine 300 is a glycosylation site (N-linked (GlcNAc...) asparagine). The helical transmembrane segment at 336–356 threads the bilayer; the sequence is LHILTGLLVTMVLVVIIIFYS. Residues 357–432 are Cytoplasmic-facing; sequence CYFSKQNKSQ…DTIVYMEIMK (76 aa).

It belongs to the immunoglobulin superfamily.

It localises to the cell membrane. Receptor on natural killer (NK) cells. Inhibits the activity of NK cells thus preventing cell lysis. The protein is Killer cell immunoglobulin-like receptor 3DL1 (Kir3dl1) of Mus musculus (Mouse).